A 159-amino-acid polypeptide reads, in one-letter code: Mediator of RNA polymerase II transcription subunit 10 (159 aa).

A disordered region spans residues 54–77; that stretch reads STHTKPQPPSQDDEQKGSANDPLL.

Belongs to the Mediator complex subunit 10 family. As to quaternary structure, component of the Mediator complex.

It is found in the nucleus. In terms of biological role, component of the Mediator complex, a coactivator involved in the regulated transcription of nearly all RNA polymerase II-dependent genes. Mediator functions as a bridge to convey information from gene-specific regulatory proteins to the basal RNA polymerase II transcription machinery. Mediator is recruited to promoters by direct interactions with regulatory proteins and serves as a scaffold for the assembly of a functional preinitiation complex with RNA polymerase II and the general transcription factors. In Aspergillus fumigatus (strain ATCC MYA-4609 / CBS 101355 / FGSC A1100 / Af293) (Neosartorya fumigata), this protein is Mediator of RNA polymerase II transcription subunit 10 (nut2).